The chain runs to 563 residues: Tripeptidyl-peptidase 1 (563 aa).

The N-terminal stretch at 1–19 is a signal peptide; that stretch reads MGLQACLLGLFALILSGKC. A propeptide spans 20–195 (removed in mature form); sequence SYSPEPDQRR…PEPQVTGTVG (176 aa). A disulfide bridge connects residues C111 and C122. Residues 199–563 enclose the Peptidase S53 domain; that stretch reads GVTPSVIRKR…PALLKTLLNP (365 aa). 2 N-linked (GlcNAc...) asparagine glycosylation sites follow: N210 and N222. Active-site charge relay system residues include E272 and D276. 3 N-linked (GlcNAc...) asparagine glycosylation sites follow: N286, N313, and N443. Disulfide bonds link C365–C526 and C522–C537. The active-site Charge relay system is the S475. Ca(2+) is bound by residues D517 and V518. G539, G541, and D543 together coordinate Ca(2+).

In terms of assembly, monomer. Interacts with CLN5. Interacts with CLN3. Ca(2+) is required as a cofactor. Post-translationally, activated by autocatalytic proteolytical processing upon acidification. N-glycosylation is required for processing and activity.

The protein localises to the lysosome. The protein resides in the melanosome. It carries out the reaction Release of an N-terminal tripeptide from a polypeptide, but also has endopeptidase activity.. Lysosomal serine protease with tripeptidyl-peptidase I activity. May act as a non-specific lysosomal peptidase which generates tripeptides from the breakdown products produced by lysosomal proteinases. Requires substrates with an unsubstituted N-terminus. The protein is Tripeptidyl-peptidase 1 (TPP1) of Pan troglodytes (Chimpanzee).